Consider the following 296-residue polypeptide: HTH-type transcriptional activator AmpR (296 aa).

Residues 6–63 form the HTH lysR-type domain; sequence LPLNALRAFEASARHLSFTRAAIELCVTQAAVSHQVKSLEERLGVALFKRLPRGLMLT. A DNA-binding region (H-T-H motif) is located at residues 23-42; it reads FTRAAIELCVTQAAVSHQVK. An includes the LysR substrate-binding / effector-binding domain, involved in binding to specific cell-wall-derived muropeptide products, some of which have signaling functions, leading to disparate responses such as antibiotic resistance, virulence, and host cell inflammation region spans residues 83–296; sequence LLERFEGGHY…EMAAVEARGR (214 aa). Residues 91–289 enclose the LysR substrate-binding domain; that stretch reads HYRDVLTVGA…AFRGWLLEMA (199 aa).

It belongs to the LysR transcriptional regulatory family. As to quaternary structure, homodimer.

It is found in the cytoplasm. It localises to the membrane. Transcription regulator that plays a critical role in the expression of beta-lactamase AmpC, acting by positive regulation of the ampC gene. Has a wider role in the regulation of expression of genes involved in proteolysis, quorum sensing, and virulence. Acts by binding directly to the promoter region of the ampC gene. Probably does not regulate transcription of its own gene. The polypeptide is HTH-type transcriptional activator AmpR (ampR) (Pseudomonas aeruginosa (strain ATCC 15692 / DSM 22644 / CIP 104116 / JCM 14847 / LMG 12228 / 1C / PRS 101 / PAO1)).